The primary structure comprises 238 residues: Pyridoxine 5'-phosphate synthase (238 aa).

The 3-amino-2-oxopropyl phosphate site is built by asparagine 7 and arginine 18. Histidine 43 (proton acceptor) is an active-site residue. 1-deoxy-D-xylulose 5-phosphate-binding residues include arginine 45 and histidine 50. Glutamate 70 serves as the catalytic Proton acceptor. Threonine 100 contributes to the 1-deoxy-D-xylulose 5-phosphate binding site. The active-site Proton donor is histidine 190. Residues aspartate 191 and 213–214 (GH) each bind 3-amino-2-oxopropyl phosphate.

This sequence belongs to the PNP synthase family. Homooctamer; tetramer of dimers.

It is found in the cytoplasm. The enzyme catalyses 3-amino-2-oxopropyl phosphate + 1-deoxy-D-xylulose 5-phosphate = pyridoxine 5'-phosphate + phosphate + 2 H2O + H(+). Its pathway is cofactor biosynthesis; pyridoxine 5'-phosphate biosynthesis; pyridoxine 5'-phosphate from D-erythrose 4-phosphate: step 5/5. Functionally, catalyzes the complicated ring closure reaction between the two acyclic compounds 1-deoxy-D-xylulose-5-phosphate (DXP) and 3-amino-2-oxopropyl phosphate (1-amino-acetone-3-phosphate or AAP) to form pyridoxine 5'-phosphate (PNP) and inorganic phosphate. This is Pyridoxine 5'-phosphate synthase from Porphyromonas gingivalis (strain ATCC 33277 / DSM 20709 / CIP 103683 / JCM 12257 / NCTC 11834 / 2561).